The primary structure comprises 85 residues: U1-ctenitoxin-Pn1a (85 aa).

Positions 1 to 16 (MKVAIVFLSLLVLAFA) are cleaved as a signal peptide. A propeptide spanning residues 17 to 34 (SESIEENREEFPVEESAR) is cleaved from the precursor. Intrachain disulfides connect Cys35/Cys49, Cys42/Cys55, Cys46/Cys81, Cys48/Cys65, and Cys57/Cys63. A propeptide spanning residues 82–85 (QNKI) is cleaved from the precursor.

The protein belongs to the neurotoxin 03 (Tx2) family. 05 subfamily. Expressed by the venom gland.

The protein localises to the secreted. Functionally, insecticidal neurotoxin that reversibly inhibits the N-methyl-D-aspartate (NMDA)-subtype of ionotropic glutamate receptor (GRIN) and inhibits inactivation of insect sodium channels (Nav). In vivo, is highly toxic to insects. This chain is U1-ctenitoxin-Pn1a, found in Phoneutria nigriventer (Brazilian armed spider).